The primary structure comprises 500 residues: Glycerol kinase (500 aa).

Residue Thr-16 participates in ADP binding. Thr-16 and Thr-17 together coordinate ATP. Thr-16 contacts sn-glycerol 3-phosphate. Position 20 (Arg-20) interacts with ADP. Sn-glycerol 3-phosphate contacts are provided by Arg-86, Glu-87, Tyr-138, and Asp-243. Arg-86, Glu-87, Tyr-138, Asp-243, and Gln-244 together coordinate glycerol. ADP-binding residues include Thr-265 and Gly-313. Thr-265, Gly-313, Gln-317, and Gly-414 together coordinate ATP. Residues Gly-414 and Asn-418 each coordinate ADP.

This sequence belongs to the FGGY kinase family.

It carries out the reaction glycerol + ATP = sn-glycerol 3-phosphate + ADP + H(+). The protein operates within polyol metabolism; glycerol degradation via glycerol kinase pathway; sn-glycerol 3-phosphate from glycerol: step 1/1. Its activity is regulated as follows. Inhibited by fructose 1,6-bisphosphate (FBP). Its function is as follows. Key enzyme in the regulation of glycerol uptake and metabolism. Catalyzes the phosphorylation of glycerol to yield sn-glycerol 3-phosphate. The sequence is that of Glycerol kinase from Nostoc sp. (strain PCC 7120 / SAG 25.82 / UTEX 2576).